The following is a 196-amino-acid chain: Sulfur-rich protein (196 aa).

The next 3 membrane-spanning stretches (helical) occupy residues 34–54, 76–96, and 105–125; these read VTAG…LIGW, ITLL…MFIF, and FWLI…SLCF.

It localises to the membrane. In Chlamydia pneumoniae (Chlamydophila pneumoniae), this protein is Sulfur-rich protein (srp).